Reading from the N-terminus, the 131-residue chain is Small ribosomal subunit protein bS6 (131 aa).

The interval 96–131 is disordered; the sequence is VTEASPMAKAKDERDSRRGPAGDRSYDEANAEEIAE. Over residues 104–122 the composition is skewed to basic and acidic residues; sequence KAKDERDSRRGPAGDRSYD.

This sequence belongs to the bacterial ribosomal protein bS6 family.

Its function is as follows. Binds together with bS18 to 16S ribosomal RNA. The sequence is that of Small ribosomal subunit protein bS6 from Shewanella sp. (strain ANA-3).